We begin with the raw amino-acid sequence, 1531 residues long: Myosin-17 (1531 aa).

In terms of domain architecture, Myosin N-terminal SH3-like spans isoleucine 8–threonine 57. One can recognise a Myosin motor domain in the interval glycine 62–alanine 732. Residues glycine 156 to threonine 163 and asparagine 209 to lysine 217 each bind ATP. Actin-binding regions lie at residues leucine 495–phenylalanine 529, asparagine 531–valine 554, phenylalanine 589–leucine 613, and leucine 613–asparagine 635. IQ domains lie at leucine 758 to alanine 787, arginine 783 to threonine 812, isoleucine 806 to alanine 835, glutamine 831 to serine 860, and leucine 854 to aspartate 883. Residues threonine 884–serine 1056 are a coiled coil. The disordered stretch occupies residues leucine 1071–aspartate 1090. Polar residues predominate over residues glutamate 1076 to aspartate 1090. One can recognise a Dilute domain in the interval aspartate 1159 to glutamate 1470. A Phosphoserine modification is found at serine 1517.

This sequence belongs to the TRAFAC class myosin-kinesin ATPase superfamily. Myosin family. Plant myosin class XI subfamily. In terms of assembly, homodimer. Interacts with MYOB1, MYOB2 and MYOB3. Interacts with PHOX1 and PHOX2. As to expression, expressed ubiquitously.

It is found in the cytoplasm. Myosin heavy chain that is required for the cell cycle-regulated transport of various organelles and proteins for their segregation. Functions by binding with its tail domain to receptor proteins on organelles and exerting force with its N-terminal motor domain against actin filaments, thereby transporting its cargo along polarized actin cables. Involved in the tip growth of root hair cells and in the elongation of trichome stalk and branches. Plays a major role in trafficking of Golgi stacks, mitochondria and peroxisomes during root hair development. Acts as the primary contributor to ER streaming with a major role in the movement of Golgi bodies. Required for development of pavement cells, trichomes, and stigmatic papillae. Together with XI-F, required for the regulation of organ bending, such as gravitropic root bending. This chain is Myosin-17, found in Arabidopsis thaliana (Mouse-ear cress).